We begin with the raw amino-acid sequence, 319 residues long: Mitochondrial fission regulator 1-like (319 aa).

Residues 1–35 form a disordered region; the sequence is MASLGAGAEPESVLFGKDGTEACESPEGRRSGRRK.

It belongs to the MTFR1 family.

Its subcellular location is the mitochondrion outer membrane. Mitochondrial protein required for adaptation of miochondrial dynamics to metabolic changes. Regulates mitochondrial morphology at steady state and mediates AMPK-dependent stress-induced mitochondrial fragmentation via the control of OPA1 levels. This Xenopus tropicalis (Western clawed frog) protein is Mitochondrial fission regulator 1-like (mtfr1l).